The primary structure comprises 497 residues: Serine/threonine-protein kinase 3 (497 aa).

N-acetylmethionine is present on methionine 1. The disordered stretch occupies residues 1–20 (MEQPPASKSKLKKLSEDSLT). Position 15 is a phosphoserine (serine 15). Residues 27–278 (FDVLEKLGEG…ATQLLQHPFI (252 aa)) form the Protein kinase domain. Residues 33–41 (LGEGSYGSV) and lysine 56 each bind ATP. The residue at position 117 (threonine 117) is a Phosphothreonine; by PKB/AKT1. The active-site Proton acceptor is aspartate 146. 2 residues coordinate Mg(2+): asparagine 151 and aspartate 164. The residue at position 180 (threonine 180) is a Phosphothreonine; by autocatalysis. The stretch at 287 to 328 (LRDLIAEAMEIKAKRHEEQQRELEEEEENSDEDELDSHTMVK) forms a coiled coil. Disordered stretches follow at residues 301-343 (RHEE…TSTM) and 368-394 (NSEEEEEEEEEEEEDGTMKRNATSPQV). Residues 309–321 (LEEEEENSDEDEL) show a composition bias toward acidic residues. Serine 316 carries the post-translational modification Phosphoserine. A compositionally biased stretch (polar residues) spans 326–343 (MVKTSSESVGTMRATSTM). Threonine 336 is modified (phosphothreonine). The stretch at 366-387 (VINSEEEEEEEEEEEEDGTMKR) forms a coiled coil. The segment covering 369–382 (SEEEEEEEEEEEED) has biased composition (acidic residues). Position 384 is a phosphothreonine (threonine 384). Threonine 390 is subject to Phosphothreonine; by PKB/AKT1. Phosphoserine is present on residues serine 391 and serine 450. Residues 443 to 490 (FDFLKNLSLEELQMRLKALDPMMEREIEELHQRYSAKRQPILDAMDAK) form the SARAH domain. Positions 448–479 (NLSLEELQMRLKALDPMMEREIEELHQRYSAK) form a coiled coil.

Belongs to the protein kinase superfamily. STE Ser/Thr protein kinase family. STE20 subfamily. As to quaternary structure, homodimer; mediated via the coiled-coil region. Interacts with NORE1, which inhibits autoactivation. Interacts with and stabilizes SAV1. Interacts with RAF1, which prevents dimerization and phosphorylation. Interacts with RASSF1. Interacts (via SARAH domain) with isoform 1 of NEK2. Interacts with ESR1 only in the presence of SAV1. Interacts with PKB/AKT1. Forms a tripartite complex with MOBKL1B and STK38. Interacts with RASSF2 (via SARAH domain). Interacts with DLG5 (via PDZ domain 3). Interacts with LATS1; this interaction is inhibited in the presence of DLG5. Interacts with MARK3 in the presence of DLG5. Interacts with RASSF5; this interaction inhibits STK3 autoactivation through heterodimerization. Interacts (when phosphorylated) with SLMAP (via FHA domain); the interaction associates STK3 with the STRIPAK complex. Mg(2+) serves as cofactor. Autophosphorylated on two residues Thr-174 and Thr-180, leading to activation. Phosphorylation at Thr-117 and Thr-390 by PKB/AKT1, leads to inhibition of its: cleavage, kinase activity, autophosphorylation at Thr-180, binding to RASSF1 and nuclear translocation, and increase in its binding to RAF1. Phosphorylated at Ser-15 by PLK1, leading to activation. In terms of processing, proteolytically cleaved by caspase-3 during apoptosis. Proteolytic cleavage results in kinase activation and nuclear translocation of the truncated form (MST1/N). Post-translationally, ubiquitinated by TRIM69; leading to its redistribution to the perinuclear cytoskeleton.

It is found in the cytoplasm. It localises to the nucleus. It catalyses the reaction L-seryl-[protein] + ATP = O-phospho-L-seryl-[protein] + ADP + H(+). The catalysed reaction is L-threonyl-[protein] + ATP = O-phospho-L-threonyl-[protein] + ADP + H(+). Its activity is regulated as follows. Inhibited by the C-terminal non-catalytic region. Activated by caspase-cleavage. Full activation also requires homodimerization and autophosphorylation of Thr-180, which are inhibited by the proto-oncogene product RAF1. Activated by RASSF1 which acts by preventing its dephosphorylation. When autophosphorylated at Thr-180, recruits STRIPAK complex and promotes PP2A-mediated dephosphorylation and inactivation of STK3. Functionally, stress-activated, pro-apoptotic kinase which, following caspase-cleavage, enters the nucleus and induces chromatin condensation followed by internucleosomal DNA fragmentation. Key component of the Hippo signaling pathway which plays a pivotal role in organ size control and tumor suppression by restricting proliferation and promoting apoptosis. The core of this pathway is composed of a kinase cascade wherein STK3/MST2 and STK4/MST1, in complex with its regulatory protein SAV1, phosphorylates and activates LATS1/2 in complex with its regulatory protein MOB1, which in turn phosphorylates and inactivates YAP1 oncoprotein and WWTR1/TAZ. Phosphorylation of YAP1 by LATS2 inhibits its translocation into the nucleus to regulate cellular genes important for cell proliferation, cell death, and cell migration. STK3/MST2 and STK4/MST1 are required to repress proliferation of mature hepatocytes, to prevent activation of facultative adult liver stem cells (oval cells), and to inhibit tumor formation. Phosphorylates NKX2-1. Phosphorylates NEK2 and plays a role in centrosome disjunction by regulating the localization of NEK2 to centrosomes, and its ability to phosphorylate CROCC and CEP250. In conjunction with SAV1, activates the transcriptional activity of ESR1 through the modulation of its phosphorylation. Positively regulates RAF1 activation via suppression of the inhibitory phosphorylation of RAF1 on 'Ser-259'. Phosphorylates MOBKL1A and RASSF2. Phosphorylates MOBKL1B on 'Thr-74'. Acts cooperatively with MOBKL1B to activate STK38. This chain is Serine/threonine-protein kinase 3 (Stk3), found in Mus musculus (Mouse).